A 97-amino-acid chain; its full sequence is Small ribosomal subunit protein bS20 (97 aa).

This sequence belongs to the bacterial ribosomal protein bS20 family.

Functionally, binds directly to 16S ribosomal RNA. This is Small ribosomal subunit protein bS20 from Prochlorococcus marinus (strain MIT 9301).